A 930-amino-acid polypeptide reads, in one-letter code: Isoleucine--tRNA ligase (930 aa).

Positions P57–H67 match the 'HIGH' region motif. E554 is a binding site for L-isoleucyl-5'-AMP. Positions K595–S599 match the 'KMSKS' region motif. ATP is bound at residue K598. The Zn(2+) site is built by C888, C891, C908, and C911.

Belongs to the class-I aminoacyl-tRNA synthetase family. IleS type 1 subfamily. In terms of assembly, monomer. It depends on Zn(2+) as a cofactor.

The protein resides in the cytoplasm. The catalysed reaction is tRNA(Ile) + L-isoleucine + ATP = L-isoleucyl-tRNA(Ile) + AMP + diphosphate. Catalyzes the attachment of isoleucine to tRNA(Ile). As IleRS can inadvertently accommodate and process structurally similar amino acids such as valine, to avoid such errors it has two additional distinct tRNA(Ile)-dependent editing activities. One activity is designated as 'pretransfer' editing and involves the hydrolysis of activated Val-AMP. The other activity is designated 'posttransfer' editing and involves deacylation of mischarged Val-tRNA(Ile). In Streptococcus pneumoniae (strain JJA), this protein is Isoleucine--tRNA ligase.